Reading from the N-terminus, the 524-residue chain is Bifunctional purine biosynthesis protein PurH (524 aa).

The MGS-like domain occupies 1–145 (MIQQALLSVS…KNHRDVTVIV (145 aa)).

The protein belongs to the PurH family.

The enzyme catalyses (6R)-10-formyltetrahydrofolate + 5-amino-1-(5-phospho-beta-D-ribosyl)imidazole-4-carboxamide = 5-formamido-1-(5-phospho-D-ribosyl)imidazole-4-carboxamide + (6S)-5,6,7,8-tetrahydrofolate. The catalysed reaction is IMP + H2O = 5-formamido-1-(5-phospho-D-ribosyl)imidazole-4-carboxamide. Its pathway is purine metabolism; IMP biosynthesis via de novo pathway; 5-formamido-1-(5-phospho-D-ribosyl)imidazole-4-carboxamide from 5-amino-1-(5-phospho-D-ribosyl)imidazole-4-carboxamide (10-formyl THF route): step 1/1. It participates in purine metabolism; IMP biosynthesis via de novo pathway; IMP from 5-formamido-1-(5-phospho-D-ribosyl)imidazole-4-carboxamide: step 1/1. In Ralstonia pickettii (strain 12J), this protein is Bifunctional purine biosynthesis protein PurH.